The chain runs to 525 residues: Cytochrome P450 714A2 (525 aa).

At 1–3 the chain is on the lumenal side; the sequence is MES. The chain crosses the membrane as a helical; Signal-anchor for type III membrane protein span at residues 4–24; it reads LVVHTVNAIWCIVIVGIFSVG. Over 25-525 the chain is Cytoplasmic; that stretch reads YHVYGRAVVE…PQHGVVIRVV (501 aa). Heme is bound at residue cysteine 475.

Belongs to the cytochrome P450 family. Requires heme as cofactor. In terms of tissue distribution, expressed in the shoot apical meristem (SAM) and petioles of young leaves, in the leaf margin and petiole vein of cotyledons, and at low levels in the filaments of developing flowers. Not detected in siliques.

It is found in the endoplasmic reticulum membrane. Functionally, involved in the inactivation of early gibberellin (GA) intermediates. This chain is Cytochrome P450 714A2 (CYP714A2), found in Arabidopsis thaliana (Mouse-ear cress).